A 424-amino-acid chain; its full sequence is GTPase Obg (424 aa).

The region spanning 1-160 (MFDRVEIRIK…YELILELKLI (160 aa)) is the Obg domain. Residues 161 to 328 (ADVAIIGYPN…LLDKVAEKLA (168 aa)) form the OBG-type G domain. GTP contacts are provided by residues 167-174 (GYPNVGKS), 192-196 (FTTLS), 213-216 (EVPG), 280-283 (NKID), and 309-311 (SAL). Mg(2+) contacts are provided by S174 and T194. Positions 349 to 424 (PAPKGKMGFH…IITGRLEWYL (76 aa)) constitute an OCT domain.

This sequence belongs to the TRAFAC class OBG-HflX-like GTPase superfamily. OBG GTPase family. Monomer. Requires Mg(2+) as cofactor.

It localises to the cytoplasm. Its function is as follows. An essential GTPase which binds GTP, GDP and possibly (p)ppGpp with moderate affinity, with high nucleotide exchange rates and a fairly low GTP hydrolysis rate. Plays a role in control of the cell cycle, stress response, ribosome biogenesis and in those bacteria that undergo differentiation, in morphogenesis control. This is GTPase Obg from Dehalococcoides mccartyi (strain ATCC BAA-2266 / KCTC 15142 / 195) (Dehalococcoides ethenogenes (strain 195)).